The primary structure comprises 407 residues: Probable acyl-CoA dehydrogenase FadE2 (407 aa).

Belongs to the acyl-CoA dehydrogenase family. It depends on FAD as a cofactor.

The catalysed reaction is a 2,3-saturated acyl-CoA + A = a 2,3-dehydroacyl-CoA + AH2. The protein is Probable acyl-CoA dehydrogenase FadE2 of Mycobacterium tuberculosis (strain ATCC 25618 / H37Rv).